The chain runs to 1219 residues: MGSPESEVSPDVQEQEAATDNPEVFEEDSADAAEGEDQIEQEEPPNCDEEAYNRDAAAATMQVGEDLGEEGDHVQEDPAEESCQIIPFESDSVEEDFSPTLTENPYEIFPTESTSFCNNTYSLDESANGHEPVCEICVEEVPGVGPPLNQHDSLPDGSGEDSPVVPDVVVVPENEGPVDDALSSPYVMGVGLLSLGEGAQSDTQAASGTLSGYSTWEEGDSEGGQVPVDRKNIATRARPHSGKVAGHVPETVLEETGPETCSSGMGIRDTSDEVRKIGILPEGKPPECVRALPAKPRAFTLYPRSFSVEGRESPLSMFREPEGAGLDSHRVRRKEDNLSLPGAIGSSGSFSQRSHLPSSGTSTPSSVVDIPPPFDLACITKKPITKSSPSLLIDGDTLEKASKKKKSSFKRFLELTFRKKTESKVHVDMNLSSSRSSSESSYHGPARVLELDRRSLSNSPQLKCRTGKLRASDSPAALIFYRDSKRKGVPFSRTVSRVESFEDRSRPPFLPLPLTKPRSISFPNADTSDYENIPAMNSDYENIQIPPRRPVRTGTFTKLFEEQSRALSTANENDGYVDMSSFNAFESKQQSSEQEAESAYTEPYKVCPISAAPREDLTSDEEQGSSEEEDSASRDPSLSHKGEGQSRALVIAQELLSSEKAYVQMLQHLSLDFHGAVLRALENVEQEGREPLAQEELRQGLRELPAICDLHQGILESLEQRLGDCGEGQPQVADIFLAREQEFEHHAAHILQFDRYLGLLAESCLLSPRLATTVREFEQSSQGGGQSMKHRMLRVVQRLFQYQVLLTDYLNNLCPDSAEYDNTQSALTLISKVTDRANESMEQGENLQKLVHIEYSVRGQGDLLQPGREFLKEGTLMRVRGKSRHPRHLFLMNDTLLYTHPQKDGKYRLKSSLPVANMKVSRPVMDKVPYALKIETPESCLTLSASSCAERDEWHYCLSRALPEDYKTQALAAFHHSVEIRERLGISLGERLPTLVPVTHAMMCMNCGCDFSLTVRRHHCHACGKIVCRNCSRNKYPLKCLKNRMAKVCDGCFRELKLRNGPVPGSMRERPVSMSFPLSSSRFSSGSALSSVFQSISPSTFKKQKKVPSALSEVAASGEGSAISGYLSRCKSGKRRWKKLWLVIKGKVLYTYLASEDKVAMESIPLLGFTIAPEKEEGSSEVGPVFHLYHKKTLFYSFKAEDSNSAQRWMEAMEDASVL.

4 disordered regions span residues M1–I85, E94–S113, S201–P227, and G310–V367. Acidic residues predominate over residues E23–E50. The span at S201–S214 shows a compositional bias: polar residues. Basic and acidic residues predominate over residues R319–N337. Residues S346–L356 show a composition bias toward polar residues. Low complexity predominate over residues P357 to V367. T555 carries the phosphothreonine modification. Low complexity predominate over residues E586 to A599. Residues E586–G644 are disordered. Positions T618–D630 are enriched in acidic residues. Over residues S631–G644 the composition is skewed to basic and acidic residues. The DH domain maps to R647–S840. The region spanning E869–P963 is the PH 1 domain. Residues V998–K1057 form an FYVE-type zinc finger. Zn(2+) is bound by residues C1004, C1007, C1020, C1023, C1028, C1031, C1049, and C1052. The region spanning G1120–V1218 is the PH 2 domain.

Expressed in highly vascularized tissues, such as lung, kidney and ovary.

It is found in the cytoplasm. Its subcellular location is the cytoskeleton. The protein resides in the cell projection. It localises to the ruffle membrane. The protein localises to the endoplasmic reticulum. It is found in the golgi apparatus. Its subcellular location is the early endosome. In terms of biological role, activates CDC42, a member of the Ras-like family of Rho- and Rac proteins, by exchanging bound GDP for free GTP. Mediates VEGF-induced CDC42 activation. May regulate proangiogenic action of VEGF in vascular endothelial cells, including network formation, directional movement and proliferation. May play a role in regulating the actin cytoskeleton and cell shape. The chain is FYVE, RhoGEF and PH domain-containing protein 5 (Fgd5) from Mus musculus (Mouse).